Here is a 215-residue protein sequence, read N- to C-terminus: MNQSILSPFGNTAEERVLNAINAFKNGTGVLVLDDEDRENEGDLIFPAETITPEQMAKLIRYGSGIVCLCITDERCQQLDLPPMVEHNNSVNKTAFTVTIEAAKGVSTGVSAADRVTTIQTAIADNAVLTDLHRPGHVFPLRAANGGVLTRRGHTEASVDLARLAGFKEAGVICEITNDDGTMARAPEIVEFAKKFGYSVLTIEDLVEYRLAHNI.

D-ribulose 5-phosphate-binding positions include 38 to 39, Asp-43, 151 to 155, and Glu-175; these read RE and RRGHT. Residue Glu-39 participates in Mg(2+) binding. Mg(2+) is bound at residue His-154.

This sequence belongs to the DHBP synthase family. As to quaternary structure, homodimer. Mg(2+) serves as cofactor. Requires Mn(2+) as cofactor.

The enzyme catalyses D-ribulose 5-phosphate = (2S)-2-hydroxy-3-oxobutyl phosphate + formate + H(+). The protein operates within cofactor biosynthesis; riboflavin biosynthesis; 2-hydroxy-3-oxobutyl phosphate from D-ribulose 5-phosphate: step 1/1. In terms of biological role, catalyzes the conversion of D-ribulose 5-phosphate to formate and 3,4-dihydroxy-2-butanone 4-phosphate. The polypeptide is 3,4-dihydroxy-2-butanone 4-phosphate synthase (Haemophilus influenzae (strain ATCC 51907 / DSM 11121 / KW20 / Rd)).